Reading from the N-terminus, the 339-residue chain is Dihydroorotate dehydrogenase (quinone) (339 aa).

FMN is bound by residues 64–68 (AGADK) and Thr-88. Lys-68 serves as a coordination point for substrate. 113–117 (NRNGF) is a binding site for substrate. Asn-141 and Asn-174 together coordinate FMN. Asn-174 lines the substrate pocket. The Nucleophile role is filled by Ser-177. Position 179 (Asn-179) interacts with substrate. Residues Lys-219 and Thr-247 each contribute to the FMN site. 248–249 (NT) contributes to the substrate binding site. Residues Gly-270, Gly-299, and 320–321 (YS) each bind FMN.

The protein belongs to the dihydroorotate dehydrogenase family. Type 2 subfamily. In terms of assembly, monomer. Requires FMN as cofactor.

The protein localises to the cell membrane. It carries out the reaction (S)-dihydroorotate + a quinone = orotate + a quinol. It functions in the pathway pyrimidine metabolism; UMP biosynthesis via de novo pathway; orotate from (S)-dihydroorotate (quinone route): step 1/1. In terms of biological role, catalyzes the conversion of dihydroorotate to orotate with quinone as electron acceptor. The polypeptide is Dihydroorotate dehydrogenase (quinone) (pyrD) (Pasteurella multocida (strain Pm70)).